The following is a 364-amino-acid chain: N-acetyl-gamma-glutamyl-phosphate reductase (364 aa).

Residue cysteine 157 is part of the active site.

Belongs to the NAGSA dehydrogenase family. Type 1 subfamily.

The protein resides in the cytoplasm. The catalysed reaction is N-acetyl-L-glutamate 5-semialdehyde + phosphate + NADP(+) = N-acetyl-L-glutamyl 5-phosphate + NADPH + H(+). The protein operates within amino-acid biosynthesis; L-arginine biosynthesis; N(2)-acetyl-L-ornithine from L-glutamate: step 3/4. Catalyzes the NADPH-dependent reduction of N-acetyl-5-glutamyl phosphate to yield N-acetyl-L-glutamate 5-semialdehyde. This chain is N-acetyl-gamma-glutamyl-phosphate reductase, found in Bifidobacterium animalis subsp. lactis (strain AD011).